Consider the following 198-residue polypeptide: NADH-quinone oxidoreductase subunit B (198 aa).

The [4Fe-4S] cluster site is built by C62, C63, C128, and C158.

It belongs to the complex I 20 kDa subunit family. As to quaternary structure, NDH-1 is composed of 14 different subunits. Subunits NuoB, C, D, E, F, and G constitute the peripheral sector of the complex. It depends on [4Fe-4S] cluster as a cofactor.

The protein resides in the cell inner membrane. It carries out the reaction a quinone + NADH + 5 H(+)(in) = a quinol + NAD(+) + 4 H(+)(out). NDH-1 shuttles electrons from NADH, via FMN and iron-sulfur (Fe-S) centers, to quinones in the respiratory chain. The immediate electron acceptor for the enzyme in this species is believed to be a menaquinone. Couples the redox reaction to proton translocation (for every two electrons transferred, four hydrogen ions are translocated across the cytoplasmic membrane), and thus conserves the redox energy in a proton gradient. The chain is NADH-quinone oxidoreductase subunit B from Phocaeicola vulgatus (strain ATCC 8482 / DSM 1447 / JCM 5826 / CCUG 4940 / NBRC 14291 / NCTC 11154) (Bacteroides vulgatus).